The sequence spans 359 residues: Peptide chain release factor 1 (359 aa).

Gln235 carries the post-translational modification N5-methylglutamine. Residues 283-305 (QKAESERSASRKTQVGSGDRSER) are disordered.

This sequence belongs to the prokaryotic/mitochondrial release factor family. Methylated by PrmC. Methylation increases the termination efficiency of RF1.

The protein resides in the cytoplasm. In terms of biological role, peptide chain release factor 1 directs the termination of translation in response to the peptide chain termination codons UAG and UAA. The chain is Peptide chain release factor 1 from Bartonella bacilliformis (strain ATCC 35685 / KC583 / Herrer 020/F12,63).